Consider the following 393-residue polypeptide: S-adenosylmethionine synthase 2 (393 aa).

Position 9 (Glu-9) interacts with Mg(2+). His-15 is an ATP binding site. Glu-43 contacts K(+). Glu-56 and Gln-99 together coordinate L-methionine. Residues 167-169 (DGK), 235-238 (SGRF), Asp-246, 252-253 (RK), Ala-269, Lys-273, and Lys-277 contribute to the ATP site. Residue Asp-246 participates in L-methionine binding. Position 277 (Lys-277) interacts with L-methionine.

This sequence belongs to the AdoMet synthase family. As to quaternary structure, homotetramer. It depends on Mn(2+) as a cofactor. Requires Mg(2+) as cofactor. Co(2+) serves as cofactor. K(+) is required as a cofactor. As to expression, mostly expressed in roots. Also present in stems and leaves.

It localises to the cytoplasm. The catalysed reaction is L-methionine + ATP + H2O = S-adenosyl-L-methionine + phosphate + diphosphate. Its pathway is amino-acid biosynthesis; S-adenosyl-L-methionine biosynthesis; S-adenosyl-L-methionine from L-methionine: step 1/1. In terms of biological role, catalyzes the formation of S-adenosylmethionine from methionine and ATP. The reaction comprises two steps that are both catalyzed by the same enzyme: formation of S-adenosylmethionine (AdoMet) and triphosphate, and subsequent hydrolysis of the triphosphate. This is S-adenosylmethionine synthase 2 (SAM2) from Solanum lycopersicum (Tomato).